A 366-amino-acid chain; its full sequence is UDP-N-acetylglucosamine--N-acetylmuramyl-(pentapeptide) pyrophosphoryl-undecaprenol N-acetylglucosamine transferase (366 aa).

Residues Thr-17–Gly-19, Asn-129, Arg-169, Ser-195, Ile-251, Ala-270–Glu-275, and Gln-296 each bind UDP-N-acetyl-alpha-D-glucosamine.

Belongs to the glycosyltransferase 28 family. MurG subfamily.

The protein localises to the cell inner membrane. It carries out the reaction di-trans,octa-cis-undecaprenyl diphospho-N-acetyl-alpha-D-muramoyl-L-alanyl-D-glutamyl-meso-2,6-diaminopimeloyl-D-alanyl-D-alanine + UDP-N-acetyl-alpha-D-glucosamine = di-trans,octa-cis-undecaprenyl diphospho-[N-acetyl-alpha-D-glucosaminyl-(1-&gt;4)]-N-acetyl-alpha-D-muramoyl-L-alanyl-D-glutamyl-meso-2,6-diaminopimeloyl-D-alanyl-D-alanine + UDP + H(+). It participates in cell wall biogenesis; peptidoglycan biosynthesis. In terms of biological role, cell wall formation. Catalyzes the transfer of a GlcNAc subunit on undecaprenyl-pyrophosphoryl-MurNAc-pentapeptide (lipid intermediate I) to form undecaprenyl-pyrophosphoryl-MurNAc-(pentapeptide)GlcNAc (lipid intermediate II). This is UDP-N-acetylglucosamine--N-acetylmuramyl-(pentapeptide) pyrophosphoryl-undecaprenol N-acetylglucosamine transferase from Shewanella denitrificans (strain OS217 / ATCC BAA-1090 / DSM 15013).